The following is a 154-amino-acid chain: Aspartate carbamoyltransferase regulatory chain (154 aa).

4 residues coordinate Zn(2+): Cys109, Cys114, Cys138, and Cys141.

The protein belongs to the PyrI family. In terms of assembly, contains catalytic and regulatory chains. The cofactor is Zn(2+).

Involved in allosteric regulation of aspartate carbamoyltransferase. This Aliivibrio salmonicida (strain LFI1238) (Vibrio salmonicida (strain LFI1238)) protein is Aspartate carbamoyltransferase regulatory chain.